A 431-amino-acid chain; its full sequence is Protein farnesyltransferase subunit beta (431 aa).

PFTB repeat units follow at residues 130 to 171 (KRKI…SLCD), 182 to 224 (RKGI…TLLN), 231 to 273 (TEGV…AILR), 280 to 322 (VEKL…AILE), and 332 to 375 (KHAL…AVAE). (2E,6E)-farnesyl diphosphate is bound by residues 258-261 (HGGY) and 301-304 (RSNK). Residues D307 and C309 each contribute to the Zn(2+) site. 310–313 (YSFW) contacts (2E,6E)-farnesyl diphosphate. H363 is a Zn(2+) binding site.

It belongs to the protein prenyltransferase subunit beta family. In terms of assembly, heterodimer of an alpha (RAM2) and a beta (RAM1) subunit. Requires Zn(2+) as cofactor.

Its subcellular location is the cytoplasm. The enzyme catalyses L-cysteinyl-[protein] + (2E,6E)-farnesyl diphosphate = S-(2E,6E)-farnesyl-L-cysteinyl-[protein] + diphosphate. Its function is as follows. Catalyzes the transfer of a farnesyl moiety from farnesyl diphosphate to a cysteine at the fourth position from the C-terminus of several proteins having the C-terminal sequence Cys-aliphatic-aliphatic-X where X is Ser, Ala, Met, Cys, or Gln. Required for the membrane localization of proteins such as a-factor, Ras proteins and other membrane proteins containing the C-terminal CAAX motif. The beta subunit is responsible for isoprenoid and peptide-binding. In Saccharomyces cerevisiae (strain ATCC 204508 / S288c) (Baker's yeast), this protein is Protein farnesyltransferase subunit beta.